We begin with the raw amino-acid sequence, 865 residues long: Carbohydrate-responsive element-binding protein (865 aa).

2 disordered regions span residues 15–41 (PRVV…AGGL) and 53–77 (MVSS…LADF). Phosphoserine occurs at positions 20, 23, and 25. Threonine 27 carries the phosphothreonine modification. Phosphoserine is present on serine 196. Disordered stretches follow at residues 334–392 (GILG…TKMP) and 500–653 (QPRC…LSRG). Positions 351–368 (GMTPLSGNTRLQARNSCS) are enriched in polar residues. Residues 515-533 (ASPPTLTSATASPTATATA) are compositionally biased toward low complexity. Serine 568 carries the phosphoserine; by AMPK modification. The span at 583–597 (PPIPAPTPPRPPPGP) shows a compositional bias: pro residues. Residues serine 615, serine 627, and serine 644 each carry the phosphoserine modification. The bHLH domain maps to 662–716 (NRRITHISAEQKRRFNIKLGFDTLHGLVSTLSAQPSLKVSKATTLQKTAEYILML). Positions 716 to 737 (LQQERAAMQEEAQQLRDEIEEL) are leucine-zipper.

Binds DNA as a heterodimer with TCFL4/MLX. Phosphorylation at Ser-568 by AMPK inactivates the DNA-binding activity.

It is found in the nucleus. Transcriptional repressor. Binds to the canonical and non-canonical E box sequences 5'-CACGTG-3'. This is Carbohydrate-responsive element-binding protein (Mlxipl) from Rattus norvegicus (Rat).